Consider the following 127-residue polypeptide: MRHYEIVILVHPDQSSQVPAMVERYQSMIKEKDGKVHRLEDWGRRQLAYSIDKVHKAHYLLMNIESDQGVISELENAFRYNDAVIRSLILKRDHAITKSSLIMQGAEKGKSSRKEKVAAEAEASEEA.

Residues 104–127 are disordered; it reads QGAEKGKSSRKEKVAAEAEASEEA. Positions 107–119 are enriched in basic and acidic residues; it reads EKGKSSRKEKVAA.

It belongs to the bacterial ribosomal protein bS6 family.

In terms of biological role, binds together with bS18 to 16S ribosomal RNA. This chain is Small ribosomal subunit protein bS6, found in Coxiella burnetii (strain CbuG_Q212) (Coxiella burnetii (strain Q212)).